A 658-amino-acid chain; its full sequence is Glycogen debranching enzyme (658 aa).

Asp336 (nucleophile) is an active-site residue. Glu371 serves as the catalytic Proton donor.

This sequence belongs to the glycosyl hydrolase 13 family.

The catalysed reaction is Hydrolysis of (1-&gt;6)-alpha-D-glucosidic linkages to branches with degrees of polymerization of three or four glucose residues in limit dextrin.. The protein operates within glycan degradation; glycogen degradation. Removes maltotriose and maltotetraose chains that are attached by 1,6-alpha-linkage to the limit dextrin main chain, generating a debranched limit dextrin. In Klebsiella pneumoniae subsp. pneumoniae (strain ATCC 700721 / MGH 78578), this protein is Glycogen debranching enzyme.